We begin with the raw amino-acid sequence, 177 residues long: Thymidine kinase (177 aa).

11–18 (GPMLSGKS) contributes to the ATP binding site. The active-site Proton acceptor is the E83. F113 is a binding site for substrate. 2 residues coordinate Zn(2+): C138 and C141. Residue 157–161 (IEIIG) coordinates substrate. Residues C170 and C173 each contribute to the Zn(2+) site.

Belongs to the thymidine kinase family. As to quaternary structure, homotetramer. Two molecules of substrate bind to each enzyme tetramer.

It catalyses the reaction thymidine + ATP = dTMP + ADP + H(+). Its function is as follows. Phosphorylates thymidine and thymidine analogs, such as azidothymidine (AZT). Part of the salvage pathway for pyrimidine deoxyribonucleotide synthesis. The polypeptide is Thymidine kinase (OPG101) (Monkeypox virus (strain Zaire-96-I-16) (MPX)).